The sequence spans 620 residues: Chaperone protein HscA homolog (620 aa).

Belongs to the heat shock protein 70 family.

Its function is as follows. Chaperone involved in the maturation of iron-sulfur cluster-containing proteins. Has a low intrinsic ATPase activity which is markedly stimulated by HscB. In Pasteurella multocida (strain Pm70), this protein is Chaperone protein HscA homolog.